A 101-amino-acid polypeptide reads, in one-letter code: uncharacterized protein (101 aa).

Helical transmembrane passes span 52 to 72 (VVFI…VKLL) and 75 to 95 (LWRL…SLLG).

The protein resides in the endoplasmic reticulum membrane. This is an uncharacterized protein from Schizosaccharomyces pombe (strain 972 / ATCC 24843) (Fission yeast).